The chain runs to 536 residues: ATP synthase subunit alpha, mitochondrial (536 aa).

A mitochondrion-targeting transit peptide spans 1–27; that stretch reads MLRQAGTRLLKVPVCGLRPSITLKRGY. An ATP-binding site is contributed by 197–204; sequence GDRQTGKT.

The protein belongs to the ATPase alpha/beta chains family. As to quaternary structure, F-type ATPases have 2 components, CF(1) - the catalytic core - and CF(0) - the membrane proton channel. CF(1) has five subunits: alpha(3), beta(3), gamma(1), delta(1), epsilon(1). CF(0) has three main subunits: a, b and c.

The protein localises to the mitochondrion. The protein resides in the mitochondrion inner membrane. Its function is as follows. Mitochondrial membrane ATP synthase (F(1)F(0) ATP synthase or Complex V) produces ATP from ADP in the presence of a proton gradient across the membrane which is generated by electron transport complexes of the respiratory chain. F-type ATPases consist of two structural domains, F(1) - containing the extramembraneous catalytic core, and F(0) - containing the membrane proton channel, linked together by a central stalk and a peripheral stalk. During catalysis, ATP synthesis in the catalytic domain of F(1) is coupled via a rotary mechanism of the central stalk subunits to proton translocation. Subunits alpha and beta form the catalytic core in F(1). Rotation of the central stalk against the surrounding alpha(3)beta(3) subunits leads to hydrolysis of ATP in three separate catalytic sites on the beta subunits. Subunit alpha does not bear the catalytic high-affinity ATP-binding sites. In Schizosaccharomyces pombe (strain 972 / ATCC 24843) (Fission yeast), this protein is ATP synthase subunit alpha, mitochondrial (atp1).